Reading from the N-terminus, the 443-residue chain is Phosphoglucosamine mutase (443 aa).

Residue serine 100 is the Phosphoserine intermediate of the active site. Residues serine 100, aspartate 239, aspartate 241, and aspartate 243 each coordinate Mg(2+). A Phosphoserine modification is found at serine 100.

This sequence belongs to the phosphohexose mutase family. Requires Mg(2+) as cofactor. Post-translationally, activated by phosphorylation.

The catalysed reaction is alpha-D-glucosamine 1-phosphate = D-glucosamine 6-phosphate. Catalyzes the conversion of glucosamine-6-phosphate to glucosamine-1-phosphate. This is Phosphoglucosamine mutase from Shewanella sediminis (strain HAW-EB3).